The sequence spans 650 residues: Glycoprotein 105 (650 aa).

A helical; Signal-anchor for type II membrane protein membrane pass occupies residues M1 to A32. At T33–Y650 the chain is on the virion surface side. N-linked (GlcNAc...) asparagine; by host glycans are attached at residues N52, N290, N332, N338, N359, N422, N516, and N552.

In terms of assembly, associates with the gp82-gp105 complex. N-Glycosylated.

The protein resides in the virion membrane. This Homo sapiens (Human) protein is Glycoprotein 105 (U96/U97/U98/U99/U100).